Here is a 722-residue protein sequence, read N- to C-terminus: MPLHQLGDKPLTFPSPNSAMENGLDHTPPSRRASPGTPLSPGSLRSAAHSPLDTSKQPLCQLWAEKHGARGTHEVRYVSAGQSVACGWWAFAPPCLQVLNTPKGILFFLCAAAFLQGMTVNGFINTVITSLERRYDLHSYQSGLIASSYDIAACLCLTFVSYFGGSGHKPRWLGWGVLLMGTGSLVFALPHFTAGRYEVELDAGVRTCPANPGAVCADSTSGLSRYQLVFMLGQFLHGVGATPLYTLGVTYLDENVKSSCSPVYIAIFYTAAILGPAAGYLIGGALLNIYTEMGRRTELTTESPLWVGAWWVGFLGSGAAAFFTAVPILGYPRQLPGSQRYAVMRAAEMHQLKDSSRGEASNPDFGKTIRDLPLSIWLLLKNPTFILLCLAGATEATLITGMSTFSPKFLESQFSLSASEAATLFGYLVVPAGGGGTFLGGFFVNKLRLRGSAVIKFCLFCTVVSLLGILVFSLHCPSVPMAGVTASYGGSLLPEGHLNLTAPCNAACSCQPEHYSPVCGSDGLMYFSLCHAGCPAATETNVDGQKVYRDCSCIPQNLSSGFGHATAGKCTSTCQRKPLLLVFIFVVIFFTFLSSIPALTATLRCVRDPQRSFALGIQWIVVRILGGIPGPIAFGWVIDKACLLWQDQCGQQGSCLVYQNSAMSRYILIMGLLYKVLGVLFFAIACFLYKPLSESSDGLETCLPSQSSAPDSATDSQLQSSV.

Residues 1–52 (MPLHQLGDKPLTFPSPNSAMENGLDHTPPSRRASPGTPLSPGSLRSAAHSPL) are disordered. Residues 1–103 (MPLHQLGDKP…PCLQVLNTPK (103 aa)) are Cytoplasmic-facing. Ser34 is modified (phosphoserine). At Thr37 the chain carries Phosphothreonine. Phosphoserine occurs at positions 40, 43, 46, and 50. A helical transmembrane segment spans residues 104–124 (GILFFLCAAAFLQGMTVNGFI). Residues 125–143 (NTVITSLERRYDLHSYQSG) lie on the Extracellular side of the membrane. The chain crosses the membrane as a helical span at residues 144–164 (LIASSYDIAACLCLTFVSYFG). Topologically, residues 165-170 (GSGHKP) are cytoplasmic. A helical membrane pass occupies residues 171 to 195 (RWLGWGVLLMGTGSLVFALPHFTAG). Residues 196–222 (RYEVELDAGVRTCPANPGAVCADSTSG) lie on the Extracellular side of the membrane. A helical membrane pass occupies residues 223 to 253 (LSRYQLVFMLGQFLHGVGATPLYTLGVTYLD). Over 254–272 (ENVKSSCSPVYIAIFYTAA) the chain is Cytoplasmic. Residues 273–293 (ILGPAAGYLIGGALLNIYTEM) form a helical membrane-spanning segment. The Extracellular portion of the chain corresponds to 294 to 307 (GRRTELTTESPLWV). Residues 308–332 (GAWWVGFLGSGAAAFFTAVPILGYP) form a helical membrane-spanning segment. Over 333 to 378 (RQLPGSQRYAVMRAAEMHQLKDSSRGEASNPDFGKTIRDLPLSIWL) the chain is Cytoplasmic. The helical transmembrane segment at 379–400 (LLKNPTFILLCLAGATEATLIT) threads the bilayer. Topologically, residues 401-420 (GMSTFSPKFLESQFSLSASE) are extracellular. Residues 421–444 (AATLFGYLVVPAGGGGTFLGGFFV) traverse the membrane as a helical segment. Residues 445–448 (NKLR) lie on the Cytoplasmic side of the membrane. Residues 449–471 (LRGSAVIKFCLFCTVVSLLGILV) traverse the membrane as a helical segment. At 472-580 (FSLHCPSVPM…TSTCQRKPLL (109 aa)) the chain is on the extracellular side. Residues 498–555 (LNLTAPCNAACSCQPEHYSPVCGSDGLMYFSLCHAGCPAATETNVDGQKVYRDCSCIP) enclose the Kazal-like domain. The N-linked (GlcNAc...) asparagine glycan is linked to Asn499. Intrachain disulfides connect Cys504-Cys534, Cys510-Cys530, and Cys519-Cys553. Asn557 carries an N-linked (GlcNAc...) asparagine glycan. A helical transmembrane segment spans residues 581–603 (LVFIFVVIFFTFLSSIPALTATL). Residues 604 to 612 (RCVRDPQRS) lie on the Cytoplasmic side of the membrane. The chain crosses the membrane as a helical span at residues 613 to 638 (FALGIQWIVVRILGGIPGPIAFGWVI). At 639-671 (DKACLLWQDQCGQQGSCLVYQNSAMSRYILIMG) the chain is on the extracellular side. Residues 672-689 (LLYKVLGVLFFAIACFLY) form a helical membrane-spanning segment. The Cytoplasmic portion of the chain corresponds to 690-722 (KPLSESSDGLETCLPSQSSAPDSATDSQLQSSV). Positions 703–722 (LPSQSSAPDSATDSQLQSSV) are disordered.

Belongs to the organo anion transporter (TC 2.A.60) family. In terms of tissue distribution, widely expressed. Expressed in placental trophoblasts. Expressed in pancreas, kidney, skeletal muscle, liver, lung, brain, heart, colon, small intestine, ovary, testis, prostate, thymus and spleen. In testis, primarily localized to Leydig cells.

Its subcellular location is the cell membrane. It carries out the reaction 3,3',5-triiodo-L-thyronine(out) + L-glutamate(in) = 3,3',5-triiodo-L-thyronine(in) + L-glutamate(out). The enzyme catalyses L-thyroxine(out) + L-glutamate(in) = L-thyroxine(in) + L-glutamate(out). The catalysed reaction is estrone 3-sulfate(out) + L-glutamate(in) = estrone 3-sulfate(in) + L-glutamate(out). It catalyses the reaction taurocholate(out) + L-glutamate(in) = taurocholate(in) + L-glutamate(out). It carries out the reaction 3,3',5-triiodo-L-thyronine(out) = 3,3',5-triiodo-L-thyronine(in). The enzyme catalyses L-thyroxine(out) = L-thyroxine(in). The catalysed reaction is 3,3',5'-triiodo-L-thyronine(out) = 3,3',5'-triiodo-L-thyronine(in). It catalyses the reaction estrone 3-sulfate(out) = estrone 3-sulfate(in). It carries out the reaction 17beta-estradiol 17-O-(beta-D-glucuronate)(out) = 17beta-estradiol 17-O-(beta-D-glucuronate)(in). The enzyme catalyses taurocholate(out) = taurocholate(in). The catalysed reaction is prostaglandin E2(out) = prostaglandin E2(in). Organic anion antiporter with apparent broad substrate specificity. Recognizes various substrates including thyroid hormones 3,3',5-triiodo-L-thyronine (T3), L-thyroxine (T4) and 3,3',5'-triiodo-L-thyronine (rT3), conjugated steroids such as estrone 3-sulfate and estradiol 17-beta glucuronide, bile acids such as taurocholate and prostanoids such as prostaglandin E2, likely operating in a tissue-specific manner. May be involved in uptake of metabolites from the circulation into organs such as kidney, liver or placenta. Possibly drives the selective transport of thyroid hormones and estrogens coupled to an outward glutamate gradient across the microvillous membrane of the placenta. The transport mechanism, its electrogenicity and potential tissue-specific counterions remain to be elucidated. The chain is Solute carrier organic anion transporter family member 4A1 (SLCO4A1) from Homo sapiens (Human).